The following is a 514-amino-acid chain: MEISWGRAMWRNFLGQSPDWYKLALLVFLIVNPFIFLANPFVAGWLLVAEFIFTLAMALKCYPLLPGGLLAIEAVIIGMTSAAHVREEVAANLEVLLLLMFMVAGIYFMKQLLLFIFTRLLLSIRSKMVLSLAFCVAAAFLSAFLDALTVVAVVISVAVGFYGIYHRVASSRGEENDMLDDSHIDPHYKTVLEQFRGFLRSLMMHAGVGTALGGVMTMVGEPQNLIIAKAAGWHFGDFFLRMSPVTVPVLVCGLLTCMLVEKMRWFGYGETLPEKVRDVLQQFDDQSRKKRTRQDKIKLIVQAVIGVWLVTALALHLAEVGLIGLSVIILATALTGVTDEHAIGKAFTESLPFTALLTVFFSIVAVIIDQHLFAPIIQFVLQASEHAQLTLFYLFNGLLSSISDNVFVGTIYINEAKAAMENGAISLKQFELLAVAINTGTNLPSVATPNGQAAFLFLLTSALAPLIRLSYGRMVWMALPYTIVLTLIGLLCVEFTLAPATEWMTQAGWLATLS.

12 consecutive transmembrane segments (helical) span residues 23-43 (LALL…PFVA), 63-83 (PLLP…TSAA), 97-117 (LLLM…LFIF), 120-140 (LLLS…AAAF), 144-164 (FLDA…FYGI), 202-222 (LMMH…VGEP), 238-258 (FFLR…LTCM), 303-323 (AVIG…VGLI), 357-377 (LTVF…APII), 391-411 (LFYL…VGTI), 447-467 (ATPN…APLI), and 475-495 (VWMA…CVEF).

It belongs to the NhaB Na(+)/H(+) (TC 2.A.34) antiporter family.

The protein localises to the cell inner membrane. The catalysed reaction is 2 Na(+)(in) + 3 H(+)(out) = 2 Na(+)(out) + 3 H(+)(in). Functionally, na(+)/H(+) antiporter that extrudes sodium in exchange for external protons. This is Na(+)/H(+) antiporter NhaB from Salmonella agona (strain SL483).